A 102-amino-acid polypeptide reads, in one-letter code: Parathymosin (102 aa).

The interval 1–102 (MSEKSVEAAA…RQKTENGASA (102 aa)) is disordered. Residue Ser-2 is modified to N-acetylserine. Ser-2 is modified (phosphoserine). Lys-4 carries the post-translational modification N6-acetyllysine. Phosphoserine is present on residues Ser-5 and Ser-13. Residues 13 to 37 (SAKDLKEKKEKVEEKASRKERKKEV) are compositionally biased toward basic and acidic residues. N6-acetyllysine is present on Lys-15. Residues 38 to 76 (VEEEENGAEEEEEETAEDGEEEDEGEEEDEEEEEEDDEG) show a composition bias toward acidic residues. Thr-52 bears the Phosphothreonine mark. Lys-92 carries the post-translational modification N6-acetyllysine.

It belongs to the pro/parathymosin family.

Parathymosin may mediate immune function by blocking the effect of prothymosin alpha which confers resistance to certain opportunistic infections. The sequence is that of Parathymosin (PTMS) from Homo sapiens (Human).